Reading from the N-terminus, the 766-residue chain is Protein zer-1 homolog (766 aa).

A2 carries the N-acetylalanine modification. 3 LRR repeats span residues 226-245 (SLVL…IVQL), 246-268 (HKLR…KLTR), and 278-302 (LGNL…KMEE). 5 ARM repeats span residues 427-467 (RSEQ…NFSI), 511-556 (DNDH…NITD), 558-600 (TPDN…NVAE), 602-643 (KELR…HIMF), and 714-756 (PDKY…HCSN).

It belongs to the zyg-11 family. As to quaternary structure, interacts with the ELOC-ELOB/Elongin BC complex. Part of an E3 ubiquitin ligase complex including ZER1, CUL2 and Elongin BC. Expressed in testis, spermatocytes and spermatids (at protein level). Expressed in spermatocytes, spermatids, prostate, skeletal muscle, ovary, small intestine, heart, brain and pancreas.

In terms of biological role, serves as substrate adapter subunit in the E3 ubiquitin ligase complex ZYG11B-CUL2-Elongin BC. Acts to target substrates bearing N-terminal degrons for proteasomal degradation with the first four residues of substrates being the key recognition elements. Involved in the clearance of proteolytic fragments generated by caspase cleavage during apoptosis since N-terminal glycine degrons are strongly enriched at caspase cleavage sites. Also important in the quality control of protein N-myristoylation in which N-terminal glycine degrons are conditionally exposed after a failure of N-myristoylation. In Homo sapiens (Human), this protein is Protein zer-1 homolog.